The primary structure comprises 181 residues: Acireductone dioxygenase (181 aa).

Fe(2+) contacts are provided by His97, His99, Glu103, and His141. His97, His99, Glu103, and His141 together coordinate Ni(2+).

The protein belongs to the acireductone dioxygenase (ARD) family. Monomer. The cofactor is Fe(2+). It depends on Ni(2+) as a cofactor.

It carries out the reaction 1,2-dihydroxy-5-(methylsulfanyl)pent-1-en-3-one + O2 = 3-(methylsulfanyl)propanoate + CO + formate + 2 H(+). The enzyme catalyses 1,2-dihydroxy-5-(methylsulfanyl)pent-1-en-3-one + O2 = 4-methylsulfanyl-2-oxobutanoate + formate + 2 H(+). It functions in the pathway amino-acid biosynthesis; L-methionine biosynthesis via salvage pathway; L-methionine from S-methyl-5-thio-alpha-D-ribose 1-phosphate: step 5/6. In terms of biological role, catalyzes 2 different reactions between oxygen and the acireductone 1,2-dihydroxy-3-keto-5-methylthiopentene (DHK-MTPene) depending upon the metal bound in the active site. Fe-containing acireductone dioxygenase (Fe-ARD) produces formate and 2-keto-4-methylthiobutyrate (KMTB), the alpha-ketoacid precursor of methionine in the methionine recycle pathway. Ni-containing acireductone dioxygenase (Ni-ARD) produces methylthiopropionate, carbon monoxide and formate, and does not lie on the methionine recycle pathway. This chain is Acireductone dioxygenase, found in Pseudomonas fluorescens (strain ATCC BAA-477 / NRRL B-23932 / Pf-5).